The following is a 253-amino-acid chain: H repeat-associated putative transposase YbfD (253 aa).

This sequence belongs to the transposase 11 family.

This Escherichia coli (strain K12) protein is H repeat-associated putative transposase YbfD (ybfD).